We begin with the raw amino-acid sequence, 363 residues long: Fructose-bisphosphate aldolase 1 (363 aa).

Residue Asp-34 coordinates dihydroxyacetone phosphate. 2 residues coordinate D-glyceraldehyde 3-phosphate: Ser-36 and Thr-39. Residue Arg-43 participates in beta-D-fructose 1,6-bisphosphate binding. Lys-107 serves as a coordination point for D-glyceraldehyde 3-phosphate. Lys-146 serves as a coordination point for dihydroxyacetone phosphate. Residue Glu-189 participates in D-glyceraldehyde 3-phosphate binding. Glu-189 functions as the Proton acceptor in the catalytic mechanism. 3 residues coordinate dihydroxyacetone phosphate: Lys-231, Ser-273, and Gly-274. Lys-231 functions as the Schiff-base intermediate with dihydroxyacetone phosphate in the catalytic mechanism. Beta-D-fructose 1,6-bisphosphate contacts are provided by residues 273–275 and Ser-301; that span reads SGG. Residues Gly-303 and Arg-304 each contribute to the dihydroxyacetone phosphate site. Arg-304 provides a ligand contact to beta-D-fructose 1,6-bisphosphate.

This sequence belongs to the class I fructose-bisphosphate aldolase family. Homotetramer. Component of a complex, at least composed of ald-1, microneme protein MIC2 and ACT1. Interacts with microneme protein MIC2 (via cytoplasmic tail). Interacts with ACT1 (F-actin).

The protein resides in the cytoplasm. It carries out the reaction beta-D-fructose 1,6-bisphosphate = D-glyceraldehyde 3-phosphate + dihydroxyacetone phosphate. The protein operates within carbohydrate degradation; glycolysis; D-glyceraldehyde 3-phosphate and glycerone phosphate from D-glucose: step 4/4. In terms of biological role, plays a key role in glycolysis by catalyzing the cleavage of fructose 1,6-bisphosphate into dihydroxyacetone phosphate and glyceraldehyde 3-phosphate. Forms a bridge between cell surface adhesins and the actin cytoskeleton. Required for parasite invasion of host cells. The sequence is that of Fructose-bisphosphate aldolase 1 from Toxoplasma gondii.